A 240-amino-acid chain; its full sequence is Pyridoxine 5'-phosphate synthase (240 aa).

Asparagine 7 is a 3-amino-2-oxopropyl phosphate binding site. 1-deoxy-D-xylulose 5-phosphate is bound at residue 9 to 10; the sequence is DH. 3-amino-2-oxopropyl phosphate is bound at residue arginine 18. Histidine 43 (proton acceptor) is an active-site residue. 1-deoxy-D-xylulose 5-phosphate contacts are provided by arginine 45 and histidine 50. Glutamate 70 (proton acceptor) is an active-site residue. Residue threonine 100 coordinates 1-deoxy-D-xylulose 5-phosphate. Histidine 191 acts as the Proton donor in catalysis. 3-amino-2-oxopropyl phosphate contacts are provided by residues glycine 192 and 213-214; that span reads GH.

The protein belongs to the PNP synthase family. Homooctamer; tetramer of dimers.

It localises to the cytoplasm. It carries out the reaction 3-amino-2-oxopropyl phosphate + 1-deoxy-D-xylulose 5-phosphate = pyridoxine 5'-phosphate + phosphate + 2 H2O + H(+). It participates in cofactor biosynthesis; pyridoxine 5'-phosphate biosynthesis; pyridoxine 5'-phosphate from D-erythrose 4-phosphate: step 5/5. Catalyzes the complicated ring closure reaction between the two acyclic compounds 1-deoxy-D-xylulose-5-phosphate (DXP) and 3-amino-2-oxopropyl phosphate (1-amino-acetone-3-phosphate or AAP) to form pyridoxine 5'-phosphate (PNP) and inorganic phosphate. This Crocosphaera subtropica (strain ATCC 51142 / BH68) (Cyanothece sp. (strain ATCC 51142)) protein is Pyridoxine 5'-phosphate synthase.